A 683-amino-acid polypeptide reads, in one-letter code: UvrABC system protein B (683 aa).

A disordered region spans residues 1–29 (MTDTGPLQPDRPDLDRPLSVDAPFEPAGD). Residues 39–417 (AGFESGAEKQ…PGDYERDHSE (379 aa)) enclose the Helicase ATP-binding domain. ATP is bound at residue 52-59 (GVTGSGKT). A Beta-hairpin motif is present at residues 105–128 (YYDYYQPEAYVEQTDTYIDKDMSI). Residues 442 to 604 (QVEDLIERIQ…EPRTIEKPVS (163 aa)) form the Helicase C-terminal domain. Residues 587–603 (EFNAEHGHEPRTIEKPV) show a composition bias toward basic and acidic residues. The disordered stretch occupies residues 587–620 (EFNAEHGHEPRTIEKPVSETNLPGSSTDTDGVAD). The span at 604–615 (SETNLPGSSTDT) shows a compositional bias: polar residues. The region spanning 630–665 (EQLIERLETRMQEAADNLEFELAADIRDRIRELRET) is the UVR domain.

Belongs to the UvrB family. In terms of assembly, forms a heterotetramer with UvrA during the search for lesions. Interacts with UvrC in an incision complex.

It is found in the cytoplasm. In terms of biological role, the UvrABC repair system catalyzes the recognition and processing of DNA lesions. A damage recognition complex composed of 2 UvrA and 2 UvrB subunits scans DNA for abnormalities. Upon binding of the UvrA(2)B(2) complex to a putative damaged site, the DNA wraps around one UvrB monomer. DNA wrap is dependent on ATP binding by UvrB and probably causes local melting of the DNA helix, facilitating insertion of UvrB beta-hairpin between the DNA strands. Then UvrB probes one DNA strand for the presence of a lesion. If a lesion is found the UvrA subunits dissociate and the UvrB-DNA preincision complex is formed. This complex is subsequently bound by UvrC and the second UvrB is released. If no lesion is found, the DNA wraps around the other UvrB subunit that will check the other stand for damage. This Natronomonas pharaonis (strain ATCC 35678 / DSM 2160 / CIP 103997 / JCM 8858 / NBRC 14720 / NCIMB 2260 / Gabara) (Halobacterium pharaonis) protein is UvrABC system protein B.